The primary structure comprises 330 residues: Replication factor C small subunit (330 aa).

Position 48–55 (48–55 (GPPGTGKT)) interacts with ATP.

It belongs to the activator 1 small subunits family. RfcS subfamily. As to quaternary structure, heteropentamer composed of four small subunits (RfcS) and one large subunit (RfcL). A homotetramer of this subunit interacts with PCNA heterodimer PCNA1-PCNA2.

Functionally, part of the RFC clamp loader complex which loads the PCNA sliding clamp onto DNA. The complex possesses DNA-dependent ATPase activity. The chain is Replication factor C small subunit (rfcS) from Saccharolobus solfataricus (strain ATCC 35092 / DSM 1617 / JCM 11322 / P2) (Sulfolobus solfataricus).